A 425-amino-acid polypeptide reads, in one-letter code: Isocitrate dehydrogenase [NADP] (425 aa).

Residue Thr-114 coordinates NADP(+). D-threo-isocitrate is bound by residues Ser-123, Asn-125, Arg-129, Arg-139, and Arg-162. Asp-316 is a binding site for Mg(2+). NADP(+)-binding positions include 348 to 354 (HGTAPKY), Asn-361, Tyr-400, and Arg-404.

This sequence belongs to the isocitrate and isopropylmalate dehydrogenases family. In terms of assembly, homodimer. The cofactor is Mg(2+). Mn(2+) is required as a cofactor.

The catalysed reaction is D-threo-isocitrate + NADP(+) = 2-oxoglutarate + CO2 + NADPH. Functionally, catalyzes the oxidative decarboxylation of isocitrate to 2-oxoglutarate and carbon dioxide with the concomitant reduction of NADP(+). The sequence is that of Isocitrate dehydrogenase [NADP] (icd) from Helicobacter pylori (strain J99 / ATCC 700824) (Campylobacter pylori J99).